A 238-amino-acid chain; its full sequence is MKIDIIISADDIVESRVRNKIAVIIDIFRATSVIITALDNGAREVIPYLTIEETLEYAKKLSRDNYILGGERKAVKIEGFDLSNSPLEYIKEKVEDKTVLMTTTNGTRALTKSMEAKRVFIGAMINGESVAKKLININDDVVIINAGTNGNFSMDDFICSGYIINRILDVNRNIELTDIAKTACMIYKENINILSYVREASHYSVMKSLGLNNDIDYCIKKSIIDIVPEYKDGKITCE.

Belongs to the ComB family. The cofactor is Mg(2+).

It carries out the reaction (2R)-O-phospho-3-sulfolactate + H2O = (2R)-3-sulfolactate + phosphate. The protein is Probable 2-phosphosulfolactate phosphatase of Clostridium beijerinckii (strain ATCC 51743 / NCIMB 8052) (Clostridium acetobutylicum).